The following is an 877-amino-acid chain: Alanine--tRNA ligase (877 aa).

Zn(2+)-binding residues include His-561, His-565, Cys-669, and His-673.

It belongs to the class-II aminoacyl-tRNA synthetase family. Zn(2+) is required as a cofactor.

It localises to the cytoplasm. It carries out the reaction tRNA(Ala) + L-alanine + ATP = L-alanyl-tRNA(Ala) + AMP + diphosphate. Catalyzes the attachment of alanine to tRNA(Ala) in a two-step reaction: alanine is first activated by ATP to form Ala-AMP and then transferred to the acceptor end of tRNA(Ala). Also edits incorrectly charged Ser-tRNA(Ala) and Gly-tRNA(Ala) via its editing domain. This chain is Alanine--tRNA ligase, found in Endomicrobium trichonymphae.